The following is a 76-amino-acid chain: uncharacterized protein (76 aa).

Helical transmembrane passes span 16 to 33 (FAFTLLAVSTFLYIGAVL) and 45 to 61 (TMFLADCVFLAGAFFCA).

It is found in the cell membrane. This is an uncharacterized protein from Bacillus subtilis (strain 168).